The sequence spans 1067 residues: Probable importin subunit beta-4 (1067 aa).

Positions 27-94 (ATRALETKYL…RSNLLDITLK (68 aa)) constitute an Importin N-terminal domain. HEAT repeat units lie at residues 159 to 196 (KLLL…VLES), 379 to 416 (GNLP…EIPT), 420 to 457 (KHHA…GLDK), 591 to 633 (PFLE…SVET), 890 to 927 (PFTR…FSTE), and 1013 to 1050 (QHLG…EIAP).

The protein belongs to the importin beta family.

The protein resides in the cytoplasm. Its subcellular location is the nucleus. It localises to the nucleus envelope. In terms of biological role, required for nuclear protein import, its predominant substrate seems to be ribosomal proteins. Binds to nucleoporins and the GTP-bound form of gsp1 (Ran). The polypeptide is Probable importin subunit beta-4 (kap123) (Schizosaccharomyces pombe (strain 972 / ATCC 24843) (Fission yeast)).